Reading from the N-terminus, the 579-residue chain is Arginine--tRNA ligase (579 aa).

The 'HIGH' region motif lies at 128–138 (PNLAKEMHVGH).

Belongs to the class-I aminoacyl-tRNA synthetase family. In terms of assembly, monomer.

It localises to the cytoplasm. The enzyme catalyses tRNA(Arg) + L-arginine + ATP = L-arginyl-tRNA(Arg) + AMP + diphosphate. This chain is Arginine--tRNA ligase, found in Pseudomonas syringae pv. syringae (strain B728a).